The chain runs to 362 residues: Stress response regulator protein 1 (362 aa).

2 disordered regions span residues 1-39 (MTRLTRPMVRSPISLPSTPSQLLHSASLSSSPSSPSLVQ) and 163-188 (TLKSTVSTSTSTSTSTSTGTNTETKT). A compositionally biased stretch (low complexity) spans 19-39 (PSQLLHSASLSSSPSSPSLVQ). Positions 209–327 (KFLLVDDNLI…LDFMANVIDE (119 aa)) constitute a Response regulatory domain. Position 260 is a 4-aspartylphosphate (Asp-260).

In terms of biological role, required for stress adaptation, morphogenesis and virulence. In Lodderomyces elongisporus (strain ATCC 11503 / CBS 2605 / JCM 1781 / NBRC 1676 / NRRL YB-4239) (Yeast), this protein is Stress response regulator protein 1 (SRR1).